The following is a 638-amino-acid chain: Bromodomain-containing factor 2 (638 aa).

Residues 1–10 (MSRTNMDTRH) are compositionally biased toward basic and acidic residues. A disordered region spans residues 1–54 (MSRTNMDTRHAHSALLAAPQSATANSRSSNSSSESSSNKNNINVGVGDDSGNVS). The span at 25 to 43 (NSRSSNSSSESSSNKNNIN) shows a compositional bias: low complexity. The Bromo 1 domain occupies 130-239 (EAEELPPHQS…KYFEKKLSAM (110 aa)). Residues 250–306 (KKTSRNRKKNEDMDSPLVIRRSVSTTNDNIGESGNREGVSGGRPKRTIHPPKSKDLF) form a disordered region. Ser-264 is subject to Phosphoserine. Positions 271–281 (SVSTTNDNIGE) are enriched in polar residues. One can recognise a Bromo 2 domain in the interval 317–426 (KTLQKKFRTC…ELFNFHWLEN (110 aa)). Positions 435–460 (TDSDLEEDNYSSSYSSDDEYDDEDIN) are disordered. Residues 450 to 460 (SDDEYDDEDIN) show a composition bias toward acidic residues. Residues 468 to 537 (AIQYLEQKLK…INELSDLEMN (70 aa)) are a coiled coil. An NET domain is found at 506-590 (TLLRRKAMKH…EKKNNNNSKR (85 aa)). The segment at 586–638 (NNSKRKLSGNYSTAPTNKKKKTLKFLEKDEIINNNNYSDSEEDSSDSSDSDSD) is disordered. Acidic residues predominate over residues 624–638 (DSEEDSSDSSDSDSD).

Belongs to the BET family. As to quaternary structure, interacts with the TFIID subunit TAF7 and with histone H4. In terms of processing, phosphorylated by the casein kinase CK2 complex.

The protein resides in the cytoplasm. The protein localises to the nucleus. Functionally, transcription factor involved in the expression of a broad class of genes including snRNAs. Required for sporulation and DNA-damage repair. Prevents the spreading of SIR silencing at telomeres and protects histone H4, but not H3, from deacetylation. The chain is Bromodomain-containing factor 2 (BDF2) from Saccharomyces cerevisiae (strain ATCC 204508 / S288c) (Baker's yeast).